Here is a 117-residue protein sequence, read N- to C-terminus: UPF0122 protein Dred_2057 (117 aa).

The protein belongs to the UPF0122 family.

Might take part in the signal recognition particle (SRP) pathway. This is inferred from the conservation of its genetic proximity to ftsY/ffh. May be a regulatory protein. The chain is UPF0122 protein Dred_2057 from Desulforamulus reducens (strain ATCC BAA-1160 / DSM 100696 / MI-1) (Desulfotomaculum reducens).